The sequence spans 120 residues: Chaperonin GroEL (120 aa).

Residue 23–27 (DGTTT) coordinates ATP.

The protein belongs to the chaperonin (HSP60) family. Forms a cylinder of 14 subunits composed of two heptameric rings stacked back-to-back. Interacts with the co-chaperonin GroES.

Its subcellular location is the cytoplasm. It carries out the reaction ATP + H2O + a folded polypeptide = ADP + phosphate + an unfolded polypeptide.. Together with its co-chaperonin GroES, plays an essential role in assisting protein folding. The GroEL-GroES system forms a nano-cage that allows encapsulation of the non-native substrate proteins and provides a physical environment optimized to promote and accelerate protein folding. In Mycolicibacter nonchromogenicus (Mycobacterium nonchromogenicum), this protein is Chaperonin GroEL.